The primary structure comprises 560 residues: N-acetylglucosamine-6-sulfatase (560 aa).

The disordered stretch occupies residues 1–25 (MRLLSLAPDRPRRGGPRHLTSGSPA). A signal peptide spans 1–48 (MRLLSLAPDRPRRGGPRHLTSGSPALPPPPPLLLLLLLLGGCLGVSGA). D63, D64, and C99 together coordinate Ca(2+). The active-site Nucleophile is C99. C99 is modified (3-oxoalanine (Cys)). N-linked (GlcNAc...) asparagine glycosylation is found at N119, N125, N191, N206, N218, N287, and N325. Residues D334 and N335 each contribute to the Ca(2+) site. Residues N370, N395, N413, N430, N457, and N488 are each glycosylated (N-linked (GlcNAc...) asparagine). S549 carries the phosphoserine modification.

Belongs to the sulfatase family. Ca(2+) is required as a cofactor. Post-translationally, the conversion to 3-oxoalanine (also known as C-formylglycine, FGly), of a serine or cysteine residue in prokaryotes and of a cysteine residue in eukaryotes, is critical for catalytic activity.

Its subcellular location is the lysosome. It carries out the reaction Hydrolysis of the 6-sulfate groups of the N-acetyl-D-glucosamine 6-sulfate units of heparan sulfate and keratan sulfate.. Its function is as follows. Hydrolyzes 6-sulfate groups in N-acetyl-d-glucosaminide units of heparin sulfate and keratan sulfate. In Bos taurus (Bovine), this protein is N-acetylglucosamine-6-sulfatase (GNS).